The primary structure comprises 823 residues: MNVYMKEKTRVFCQNSFDDLDDNIGIVMPILTECDVDEDFTEGIEKVGDTIPILPLRNMVLFPGVALPVIIGRPKSMRLIKEAVHKKSLIGVVCQKEMGTEDPILEDLYTTGVIADIVRVLEMPDGSTTVILQGKKRFELNELTETDPYLSGKITVLEDTKPDKTDREFEALISTIKDLTIKMLGAVAEPPRDLIFSIKNNKNVLYVVNFSCSNIPSGSAEKQQLLLIGDLKERAYRLLFILNREYQLVELKASIQMKTHEDINQQQKEYFLQQQIKTIQEELGGNINELEIKELREKASRKKWPAEVAQVFEKELRKLERLHPQSPDYSVQTQYVQNIVNLPWNEYSKDNFNLSHAQKVLDRDHYGLEKVKERIIEHLAVLKLKGDMKSPIICLYGPPGVGKTSLGRSIAEALRRKYVRVSLGGLHDEAEIRGHRRTYIGAMCGRIIQNIQKAGTSNPVFILDEIDKITNDFKGDPASALLEVLDPEQNNAFHDNYLDIDYDLSKVMFIATANNLNTISQPLLDRMELIEVSGYIMEEKVEIAAKHLVPKQMDVHGLKKGSVKFPKKTLQVIVEAYTRESGVRELDKKIAKIMRKLARKVASDEPIPTSIKPEDLYEYLGAVEYSRDKYQGNDYAGVVTGLAWTAVGGEILFVESSLSKGKGSKLTLTGNLGDVMKESAMLALEYIHAHAAQFNINEELFENWNVHVHVPEGAIPKDGPSAGITMVTSLVSAFTQRKVKKNLAMTGEITLRGKVLPVGGIKEKILAAKRAGIKELILCKENEKDINEIKPEYLKGLVFHYVSDIQQVVDLALLREKVDNPLF.

A Lon N-terminal domain is found at 51–246; that stretch reads IPILPLRNMV…RLLFILNREY (196 aa). 397 to 404 is a binding site for ATP; that stretch reads GPPGVGKT. In terms of domain architecture, Lon proteolytic spans 633–815; that stretch reads NDYAGVVTGL…QQVVDLALLR (183 aa). Active-site residues include serine 721 and lysine 764.

The protein belongs to the peptidase S16 family. As to quaternary structure, homohexamer. Organized in a ring with a central cavity.

It is found in the cytoplasm. The enzyme catalyses Hydrolysis of proteins in presence of ATP.. Functionally, ATP-dependent serine protease that mediates the selective degradation of mutant and abnormal proteins as well as certain short-lived regulatory proteins. Required for cellular homeostasis and for survival from DNA damage and developmental changes induced by stress. Degrades polypeptides processively to yield small peptide fragments that are 5 to 10 amino acids long. Binds to DNA in a double-stranded, site-specific manner. The protein is Lon protease of Parabacteroides distasonis (strain ATCC 8503 / DSM 20701 / CIP 104284 / JCM 5825 / NCTC 11152).